A 353-amino-acid chain; its full sequence is Guanine nucleotide-binding protein alpha-3 subunit (353 aa).

A lipid anchor (N-myristoyl glycine) is attached at Gly-2. Cys-4 is lipidated: S-palmitoyl cysteine. The region spanning 32-353 is the G-alpha domain; sequence KVVKLLLLGA…IQANLQGCGL (322 aa). Residues 35-48 are G1 motif; it reads KLLLLGAGECGKST. GTP is bound by residues 40-47, 176-182, 201-205, 270-273, and Ala-326; these read GAGECGKS, LLSRIKT, DVGGQ, and NKKD. The Mg(2+) site is built by Ser-47 and Thr-182. The interval 174–182 is G2 motif; it reads DILLSRIKT. The tract at residues 197–206 is G3 motif; it reads FRVFDVGGQR. A G4 motif region spans residues 266–273; sequence ILFLNKKD. Positions 324–329 are G5 motif; sequence TCATDT.

It belongs to the G-alpha family. G(q) subfamily. In terms of assembly, g proteins are composed of 3 units; alpha, beta and gamma. The alpha chain contains the guanine nucleotide binding site.

Guanine nucleotide-binding proteins (G proteins) are involved as modulators or transducers in various transmembrane signaling systems. Promotes transcription of 3',5'-cyclic phosphodiesterases pde-1 and pde-5, leading to reduced cGMP levels in sensory neurons. This causes suppression of insulin production and signaling which leads to increased daf-16 activity and contributes to increased adult lifespan and resistance to oxidative stress. In addition, by reducing cGMP levels, inhibits TGF-beta signaling pathways. Involved in behavioral response to P.aeruginosa by controlling the expression of daf-7, a member of the TGF-beta family, in ASJ sensory neurons. Plays a role in the avoidance response to the noxious chemical quinine in ASH sensory neurons. This chain is Guanine nucleotide-binding protein alpha-3 subunit, found in Caenorhabditis elegans.